The sequence spans 352 residues: Maleylacetate reductase (352 aa).

The protein belongs to the iron-containing alcohol dehydrogenase family.

It catalyses the reaction 3-oxoadipate + NAD(+) = maleylacetate + NADH + H(+). The enzyme catalyses 3-oxoadipate + NADP(+) = maleylacetate + NADPH + H(+). It functions in the pathway aromatic compound metabolism; 3-chlorocatechol degradation. In Pseudomonas sp. (strain P51), this protein is Maleylacetate reductase (tcbF).